Reading from the N-terminus, the 110-residue chain is VEVLTQTPSPVSAAVGGTVTISCQSTKSIYBBBYLAWYQZKPGQPPKALIYTASSLASGVPSRFTGSGSGTZFTLTLSDVZCDDAATYYCGGADYTGYSFGGGTEVVVKG.

The segment at 1 to 23 (VEVLTQTPSPVSAAVGGTVTISC) is framework-1. The complementarity-determining-1 stretch occupies residues 24–36 (QSTKSIYBBBYLA). The framework-2 stretch occupies residues 37–51 (WYQZKPGQPPKALIY). A complementarity-determining-2 region spans residues 52 to 58 (TASSLAS). The segment at 59-90 (GVPSRFTGSGSGTZFTLTLSDVZCDDAATYYC) is framework-3. Residues 91 to 99 (GGADYTGYS) are complementarity-determining-3. Positions 100-109 (FGGGTEVVVK) are framework-4.

This chain is Ig kappa chain V region 2717, found in Oryctolagus cuniculus (Rabbit).